The following is a 106-amino-acid chain: MNDSEFHQLADELMLQLEETLDRFEGDADIDYETNGGVMTLSFENGSKIVINRQEPLHQIWLATKAGGYHFNRQETRWICDRSGEDFITLLSSACSTQAGETVRFE.

This sequence belongs to the frataxin family.

Its function is as follows. Involved in iron-sulfur (Fe-S) cluster assembly. May act as a regulator of Fe-S biogenesis. This is Iron-sulfur cluster assembly protein CyaY from Pectobacterium carotovorum subsp. carotovorum (strain PC1).